A 92-amino-acid chain; its full sequence is Cell division topological specificity factor (92 aa).

The protein belongs to the MinE family.

Its function is as follows. Prevents the cell division inhibition by proteins MinC and MinD at internal division sites while permitting inhibition at polar sites. This ensures cell division at the proper site by restricting the formation of a division septum at the midpoint of the long axis of the cell. This Gluconobacter oxydans (strain 621H) (Gluconobacter suboxydans) protein is Cell division topological specificity factor.